The sequence spans 182 residues: ATP synthase subunit delta (182 aa).

This sequence belongs to the ATPase delta chain family. As to quaternary structure, F-type ATPases have 2 components, F(1) - the catalytic core - and F(0) - the membrane proton channel. F(1) has five subunits: alpha(3), beta(3), gamma(1), delta(1), epsilon(1). F(0) has three main subunits: a(1), b(2) and c(10-14). The alpha and beta chains form an alternating ring which encloses part of the gamma chain. F(1) is attached to F(0) by a central stalk formed by the gamma and epsilon chains, while a peripheral stalk is formed by the delta and b chains.

Its subcellular location is the cell inner membrane. F(1)F(0) ATP synthase produces ATP from ADP in the presence of a proton or sodium gradient. F-type ATPases consist of two structural domains, F(1) containing the extramembraneous catalytic core and F(0) containing the membrane proton channel, linked together by a central stalk and a peripheral stalk. During catalysis, ATP synthesis in the catalytic domain of F(1) is coupled via a rotary mechanism of the central stalk subunits to proton translocation. Functionally, this protein is part of the stalk that links CF(0) to CF(1). It either transmits conformational changes from CF(0) to CF(1) or is implicated in proton conduction. The sequence is that of ATP synthase subunit delta from Histophilus somni (strain 129Pt) (Haemophilus somnus).